The chain runs to 217 residues: Probable transaldolase (217 aa).

Residue Lys83 is the Schiff-base intermediate with substrate of the active site.

Belongs to the transaldolase family. Type 3B subfamily.

It localises to the cytoplasm. The enzyme catalyses D-sedoheptulose 7-phosphate + D-glyceraldehyde 3-phosphate = D-erythrose 4-phosphate + beta-D-fructose 6-phosphate. It functions in the pathway carbohydrate degradation; pentose phosphate pathway; D-glyceraldehyde 3-phosphate and beta-D-fructose 6-phosphate from D-ribose 5-phosphate and D-xylulose 5-phosphate (non-oxidative stage): step 2/3. Transaldolase is important for the balance of metabolites in the pentose-phosphate pathway. This chain is Probable transaldolase, found in Lactiplantibacillus plantarum (strain ATCC BAA-793 / NCIMB 8826 / WCFS1) (Lactobacillus plantarum).